Reading from the N-terminus, the 545-residue chain is Chaperonin GroEL 2 (545 aa).

ATP is bound by residues T29–P32, D86–T90, G413, N479–A481, and D495.

It belongs to the chaperonin (HSP60) family. In terms of assembly, forms a cylinder of 14 subunits composed of two heptameric rings stacked back-to-back. Interacts with the co-chaperonin GroES.

The protein localises to the cytoplasm. It catalyses the reaction ATP + H2O + a folded polypeptide = ADP + phosphate + an unfolded polypeptide.. In terms of biological role, together with its co-chaperonin GroES, plays an essential role in assisting protein folding. The GroEL-GroES system forms a nano-cage that allows encapsulation of the non-native substrate proteins and provides a physical environment optimized to promote and accelerate protein folding. This Prochlorococcus marinus (strain MIT 9301) protein is Chaperonin GroEL 2.